Here is a 391-residue protein sequence, read N- to C-terminus: NADH-quinone oxidoreductase subunit D (391 aa).

It belongs to the complex I 49 kDa subunit family. In terms of assembly, NDH-1 is composed of 14 different subunits. Subunits NuoB, C, D, E, F, and G constitute the peripheral sector of the complex.

Its subcellular location is the cell inner membrane. It catalyses the reaction a quinone + NADH + 5 H(+)(in) = a quinol + NAD(+) + 4 H(+)(out). NDH-1 shuttles electrons from NADH, via FMN and iron-sulfur (Fe-S) centers, to quinones in the respiratory chain. The immediate electron acceptor for the enzyme in this species is believed to be ubiquinone. Couples the redox reaction to proton translocation (for every two electrons transferred, four hydrogen ions are translocated across the cytoplasmic membrane), and thus conserves the redox energy in a proton gradient. This chain is NADH-quinone oxidoreductase subunit D, found in Rickettsia massiliae (strain Mtu5).